The following is a 538-amino-acid chain: Lipid scramblase CLPTM1L (538 aa).

The Cytoplasmic segment spans residues 1-10; sequence MWSGRSSFTS. A helical transmembrane segment spans residues 11–31; sequence LVVGVFVVYVVHTCWVMYGIV. Topologically, residues 32 to 284 are extracellular; the sequence is YTRPCSGDAN…VKGIFVDTNL (253 aa). Residues Asn91 and Asn101 are each glycosylated (N-linked (GlcNAc...) asparagine). The chain crosses the membrane as a helical span at residues 285–305; the sequence is YFLALTFFVAAFHLLFDFLAF. Topologically, residues 306 to 324 are cytoplasmic; that stretch reads KNDISFWKKKKSMIGMSTK. Residues 325-342 traverse the membrane as a helical segment; the sequence is AVLWRCFSTVVIFLFLLD. Topologically, residues 343-346 are extracellular; sequence EQTS. The chain crosses the membrane as a helical span at residues 347–364; the sequence is LLVLVPAGVGAAIELWKV. The Cytoplasmic portion of the chain corresponds to 365-402; sequence KKALKMTILWRGLMPEFELGTYSESERKTEEYDTQAMK. The chain crosses the membrane as a helical span at residues 403-423; it reads YLSYLLYPLCVGGAVYSLLNI. Residues 424-428 lie on the Extracellular side of the membrane; the sequence is KYKSW. Residues 429 to 449 traverse the membrane as a helical segment; that stretch reads YSWLINSFVNGVYAFGFLFML. At 450 to 538 the chain is on the cytoplasmic side; that stretch reads PQLFVNYKLK…EKAARAPHTD (89 aa).

Belongs to the CLPTM1 family.

Its subcellular location is the endoplasmic reticulum membrane. It catalyses the reaction a 6-(alpha-D-glucosaminyl)-1-(1,2-diacyl-sn-glycero-3-phospho)-1D-myo-inositol(in) = a 6-(alpha-D-glucosaminyl)-1-(1,2-diacyl-sn-glycero-3-phospho)-1D-myo-inositol(out). The enzyme catalyses 6-(alpha-D-glucosaminyl)-(1-octadecanoyl,2-(9Z)-octadecenoyl-sn-glycero-3-phospho)-1D-myo-inositol(in) = 6-(alpha-D-glucosaminyl)-(1-octadecanoyl,2-(9Z)-octadecenoyl-sn-glycero-3-phospho)-1D-myo-inositol(out). It carries out the reaction a 1,2-diacyl-sn-glycero-3-phospho-(1D-myo-inositol)(in) = a 1,2-diacyl-sn-glycero-3-phospho-(1D-myo-inositol)(out). The catalysed reaction is a 1,2-diacyl-sn-glycero-3-phosphocholine(in) = a 1,2-diacyl-sn-glycero-3-phosphocholine(out). It catalyses the reaction a 1,2-diacyl-sn-glycero-3-phosphoethanolamine(in) = a 1,2-diacyl-sn-glycero-3-phosphoethanolamine(out). Its function is as follows. Scramblase that mediates the translocation of glucosaminylphosphatidylinositol (alpha-D-GlcN-(1-6)-(1,2-diacyl-sn-glycero-3-phospho)-1D-myo-inositol, GlcN-PI) across the endoplasmic reticulum (ER) membrane, from the cytosolic leaflet to the luminal leaflet of the ER membrane, where it participates in the biosynthesis of glycosylphosphatidylinositol (GPI). GPI is a lipid glycoconjugate involved in post-translational modification of proteins. Can also translocate 1,2-diacyl-sn-glycero-3-phospho-(1D-myo-inositol) (phosphatidylinositol or PI), as well as several other phospholipids (1,2-diacyl-sn-glycero-3-phosphocholine, 1,2-diacyl-sn-glycero-3-phosphoethanolamine), and N-acetylglucosaminylphosphatidylinositol (GlcNAc-PI) in vitro. The chain is Lipid scramblase CLPTM1L (CLPTM1L) from Pongo abelii (Sumatran orangutan).